Reading from the N-terminus, the 2801-residue chain is Neurobeachin-like protein 2 (2801 aa).

A disordered region spans residues 1379–1529; it reads RHEEEYEEEE…TISNTSNPQA (151 aa). A compositionally biased stretch (acidic residues) spans 1383-1393; the sequence is EYEEEEGETQD. 4 stretches are compositionally biased toward polar residues: residues 1400 to 1413, 1424 to 1437, 1470 to 1481, and 1500 to 1528; these read DLSQ…QLKN, GDQS…SNTV, KGPQTPVGSQPE, and SSSL…SNPQ. The BEACH-type PH domain occupies 1986-2086; the sequence is SQKEKLVLSE…VRNKVYSRIL (101 aa). A BEACH domain is found at 2099 to 2391; sequence RSPQELLKAS…QLLKEPHPPR (293 aa). WD repeat units lie at residues 2431–2468, 2492–2535, 2538–2575, 2588–2626, 2633–2676, 2684–2719, and 2727–2762; these read LVQA…SWLP, RFLS…MLGK, LVGR…VWQV, RPIQ…VHSV, WTLR…RYAL, TLLA…IRDL, and APLA…VGAG.

It belongs to the WD repeat neurobeachin family.

The protein resides in the endoplasmic reticulum. In terms of biological role, involved in thrombopoiesis. Plays a role in the development or secretion of alpha-granules, that contain several growth factors important for platelet biogenesis. This is Neurobeachin-like protein 2 (nbeal2) from Danio rerio (Zebrafish).